The primary structure comprises 427 residues: Mitogen-activated protein kinase 8B (427 aa).

The Protein kinase domain maps to 26 to 321 (YQNLRPIGSG…VDEALQHPYI (296 aa)). ATP is bound by residues 33 to 40 (GSGAQGIV) and Lys-55. Asp-151 serves as the catalytic Proton acceptor. Position 183 is a phosphothreonine (Thr-183). The TXY signature appears at 183-185 (TPY). Residue Tyr-185 is modified to Phosphotyrosine. Residues 372-427 (IRGQPSPIGAAVINGSPQPSSSSSINDVSSMSTEPTVASDTDSSLEASAGPLSCCR) are disordered. Residues 387–403 (SPQPSSSSSINDVSSMS) are compositionally biased toward low complexity. Over residues 404–417 (TEPTVASDTDSSLE) the composition is skewed to polar residues.

The protein belongs to the protein kinase superfamily. CMGC Ser/Thr protein kinase family. MAP kinase subfamily. Mg(2+) serves as cofactor. Post-translationally, dually phosphorylated on Thr-183 and Tyr-185, which activates the enzyme. In terms of tissue distribution, expressed at high levels in the ovary and at lower levels in brain, gill, heart, spleen, liver, kidney, muscle, bladder and gut.

It catalyses the reaction L-seryl-[protein] + ATP = O-phospho-L-seryl-[protein] + ADP + H(+). The catalysed reaction is L-threonyl-[protein] + ATP = O-phospho-L-threonyl-[protein] + ADP + H(+). Its activity is regulated as follows. Activated by threonine and tyrosine phosphorylation. Responds to activation by environmental stress and pro-inflammatory cytokines by phosphorylating a number of transcription factors, primarily components of AP-1 such as c-Jun and ATF2 and thus regulates AP-1 transcriptional activity. May play a role in the regulation of the circadian clock. The protein is Mitogen-activated protein kinase 8B (mapk8b) of Cyprinus carpio (Common carp).